A 265-amino-acid polypeptide reads, in one-letter code: Hydroxyethylthiazole kinase 2 (265 aa).

A substrate-binding site is contributed by Met-39. ATP is bound by residues Lys-115 and Thr-168. Substrate is bound at residue Gly-195.

Belongs to the Thz kinase family. Requires Mg(2+) as cofactor.

It catalyses the reaction 5-(2-hydroxyethyl)-4-methylthiazole + ATP = 4-methyl-5-(2-phosphooxyethyl)-thiazole + ADP + H(+). Its pathway is cofactor biosynthesis; thiamine diphosphate biosynthesis; 4-methyl-5-(2-phosphoethyl)-thiazole from 5-(2-hydroxyethyl)-4-methylthiazole: step 1/1. In terms of biological role, catalyzes the phosphorylation of the hydroxyl group of 4-methyl-5-beta-hydroxyethylthiazole (THZ). In Clostridium botulinum (strain Okra / Type B1), this protein is Hydroxyethylthiazole kinase 2.